The sequence spans 342 residues: 6-hydroxytryprostatin B O-methyltransferase (342 aa).

Asp201 serves as a coordination point for S-adenosyl-L-methionine. Catalysis depends on His244, which acts as the Proton acceptor.

It belongs to the class I-like SAM-binding methyltransferase superfamily. Cation-independent O-methyltransferase family. Homodimer.

The catalysed reaction is 6-hydroxytryprostatin B + S-adenosyl-L-methionine = tryprostatin A + S-adenosyl-L-homocysteine + H(+). Its pathway is alkaloid biosynthesis. Functionally, 6-hydroxytryprostatin B O-methyltransferase; part of the gene cluster that mediates the biosynthesis of fumitremorgins, indole alkaloids that carry not only intriguing chemical structures, but also interesting biological and pharmacological activities. The biosynthesis of fumitremorgin-type alkaloids begins by condensation of the two amino acids L-tryptophan and L-proline to brevianamide F, catalyzed by the non-ribosomal peptide synthetase ftmA. Brevianamide F is then prenylated by the prenyltransferase ftmPT1/ftmB in the presence of dimethylallyl diphosphate, resulting in the formation of tryprostatin B. The three cytochrome P450 monooxygenases, ftmP450-1/ftmC, ftmP450-2/ftmE and ftmP450-3/FtmG, are responsible for the conversion of tryprostatin B to 6-hydroxytryprostatin B, tryprostatin A to fumitremorgin C and fumitremorgin C to 12,13-dihydroxyfumitremorgin C, respectively. The putative methyltransferase ftmMT/ftmD is expected for the conversion of 6-hydroxytryprostatin B to tryprostatin A. FtmPT2/FtmH catalyzes the prenylation of 12,13-dihydroxyfumitre-morgin C in the presence of dimethylallyl diphosphate, resulting in the formation of fumitremorgin B. Fumitremorgin B is further converted to verruculogen by ftmOx1/ftmF via the insertion of an endoperoxide bond between the two prenyl moieties. In some fungal species, verruculogen is further converted to fumitremorgin A, but the enzymes involved in this step have not been identified yet. In Aspergillus fumigatus (Neosartorya fumigata), this protein is 6-hydroxytryprostatin B O-methyltransferase.